The primary structure comprises 208 residues: Methyl-CpG-binding domain protein 3-like 5 (208 aa).

It belongs to the MBD3L family.

This Homo sapiens (Human) protein is Methyl-CpG-binding domain protein 3-like 5 (MBD3L5).